A 161-amino-acid polypeptide reads, in one-letter code: Endoribonuclease YbeY (161 aa).

3 residues coordinate Zn(2+): H127, H131, and H137.

This sequence belongs to the endoribonuclease YbeY family. The cofactor is Zn(2+).

Its subcellular location is the cytoplasm. Its function is as follows. Single strand-specific metallo-endoribonuclease involved in late-stage 70S ribosome quality control and in maturation of the 3' terminus of the 16S rRNA. The polypeptide is Endoribonuclease YbeY (Listeria innocua serovar 6a (strain ATCC BAA-680 / CLIP 11262)).